The following is a 299-amino-acid chain: Protoheme IX farnesyltransferase 1 (299 aa).

8 consecutive transmembrane segments (helical) span residues 25 to 45, 47 to 67, 95 to 115, 119 to 139, 147 to 167, 173 to 193, 226 to 246, and 279 to 299; these read VVVL…RAGV, WTVL…AAAV, TGAL…LLTF, LTAW…TGFL, IVIG…AATG, PLLL…ALAI, ALLA…LYLI, and IWYL…LLNL.

The protein belongs to the UbiA prenyltransferase family. Protoheme IX farnesyltransferase subfamily.

It localises to the cell inner membrane. It carries out the reaction heme b + (2E,6E)-farnesyl diphosphate + H2O = Fe(II)-heme o + diphosphate. The protein operates within porphyrin-containing compound metabolism; heme O biosynthesis; heme O from protoheme: step 1/1. Its function is as follows. Converts heme B (protoheme IX) to heme O by substitution of the vinyl group on carbon 2 of heme B porphyrin ring with a hydroxyethyl farnesyl side group. This is Protoheme IX farnesyltransferase 1 from Pseudomonas fluorescens (strain Pf0-1).